The primary structure comprises 337 residues: MSELKTGHAGHNPWASVANSGPISILSYCGSSILMTVTNKFVVNLKDFNMNFVMLFVQSLVCTITLIILRILGYAKFRSLNKTDAKNWFPISFLLVLMIYTSSKALQYLAVPIYTIFKNLTIILIAYGEVLFFGGSVTSMELSSFLLMVLSSVVATWGDQQAVAAKAASLAEGAAGAVASFNPGYFWMFTNCITSALFVLIMRKRIKLTNFKDFDTMFYNNVLALPILLLFSFCVEDWSSVNLTNNFSNDSLTAMIISGVASVGISYCSGWCVRVTSSTTYSMVGALNKLPIALSGLIFFDAPRNFLSILSIFIGFLSGIIYAVAKQKKQQAQPLRK.

Residues 1–16 (MSELKTGHAGHNPWAS) lie on the Cytoplasmic side of the membrane. A helical membrane pass occupies residues 17–37 (VANSGPISILSYCGSSILMTV). Residues 38–51 (TNKFVVNLKDFNMN) are Lumenal-facing. Residues 52-72 (FVMLFVQSLVCTITLIILRIL) form a helical membrane-spanning segment. Topologically, residues 73-92 (GYAKFRSLNKTDAKNWFPIS) are cytoplasmic. Residues 93–113 (FLLVLMIYTSSKALQYLAVPI) form a helical membrane-spanning segment. The Lumenal portion of the chain corresponds to 114–119 (YTIFKN). Asn119 is a glycosylation site (N-linked (GlcNAc...) asparagine). A helical transmembrane segment spans residues 120–140 (LTIILIAYGEVLFFGGSVTSM). Topologically, residues 141-144 (ELSS) are cytoplasmic. Residues 145–165 (FLLMVLSSVVATWGDQQAVAA) traverse the membrane as a helical segment. Topologically, residues 166–180 (KAASLAEGAAGAVAS) are lumenal. Residues 181–201 (FNPGYFWMFTNCITSALFVLI) traverse the membrane as a helical segment. Residues 202 to 215 (MRKRIKLTNFKDFD) lie on the Cytoplasmic side of the membrane. Residues 216–236 (TMFYNNVLALPILLLFSFCVE) traverse the membrane as a helical segment. Over 237-252 (DWSSVNLTNNFSNDSL) the chain is Lumenal. N-linked (GlcNAc...) asparagine glycosylation is found at Asn242, Asn246, and Asn249. The helical transmembrane segment at 253 to 273 (TAMIISGVASVGISYCSGWCV) threads the bilayer. Residues 274–279 (RVTSST) lie on the Cytoplasmic side of the membrane. Residues 280 to 300 (TYSMVGALNKLPIALSGLIFF) form a helical membrane-spanning segment. The Lumenal portion of the chain corresponds to 301-304 (DAPR). The helical transmembrane segment at 305 to 325 (NFLSILSIFIGFLSGIIYAVA) threads the bilayer. The Cytoplasmic portion of the chain corresponds to 326-337 (KQKKQQAQPLRK).

This sequence belongs to the TPT transporter family. SLC35D subfamily. Homooligomer.

The protein resides in the golgi apparatus membrane. It localises to the cytoplasmic vesicle membrane. The protein localises to the endoplasmic reticulum membrane. Its function is as follows. Involved in the import of GDP-mannose from the cytoplasm into the Golgi lumen. Defective copy causes severe glycosylation defect and abnormal retention of soluble endoplasmic reticulum proteins. Involved in vanadate sensitivity. The polypeptide is GDP-mannose transporter 1 (VRG4) (Saccharomyces cerevisiae (strain YJM789) (Baker's yeast)).